Consider the following 381-residue polypeptide: Homoserine O-succinyltransferase (381 aa).

In terms of domain architecture, AB hydrolase-1 spans 45 to 360 (NAVLVCHALN…PHGHDAFLLD (316 aa)). The Nucleophile role is filled by Ser151. Arg221 serves as a coordination point for substrate. Active-site residues include Asp321 and His354. Asp355 serves as a coordination point for substrate.

The protein belongs to the AB hydrolase superfamily. MetX family. In terms of assembly, homodimer.

The protein resides in the cytoplasm. It catalyses the reaction L-homoserine + succinyl-CoA = O-succinyl-L-homoserine + CoA. Its pathway is amino-acid biosynthesis; L-methionine biosynthesis via de novo pathway; O-succinyl-L-homoserine from L-homoserine: step 1/1. Functionally, transfers a succinyl group from succinyl-CoA to L-homoserine, forming succinyl-L-homoserine. The chain is Homoserine O-succinyltransferase from Burkholderia multivorans (strain ATCC 17616 / 249).